The following is a 192-amino-acid chain: MDNQFIFKYSWETLPKKWVKKIEKSEHGNRFDTNTDYLFQLLCFLKLHTYTRFQVLIDICGVDYPSRKRRFEVVYNLLSTRYNSRIRLQTSADEVTRISSVVRLFPSAGWWEREVWDMFGVSFINHPDLRRILTDYGFEGHPLRKDFPLSGYVEVRYDDPEKRVVSEPIEMTQEFRYFDFASPWEQRNGNEG.

It belongs to the complex I 30 kDa subunit family. In terms of assembly, complex I is composed of about 45 different subunits. This is a component of the iron-sulfur (IP) fragment of the enzyme.

The protein localises to the mitochondrion inner membrane. The enzyme catalyses a ubiquinone + NADH + 5 H(+)(in) = a ubiquinol + NAD(+) + 4 H(+)(out). Functionally, core subunit of the mitochondrial membrane respiratory chain NADH dehydrogenase (Complex I) that is believed to belong to the minimal assembly required for catalysis. Complex I functions in the transfer of electrons from NADH to the respiratory chain. The immediate electron acceptor for the enzyme is believed to be ubiquinone. The sequence is that of NADH dehydrogenase [ubiquinone] iron-sulfur protein 3 (NAD9) from Patellifolia webbiana (Patellaria webbiana).